We begin with the raw amino-acid sequence, 24 residues long: M-ectatotoxin-Eb2b (24 aa).

Expressed by the venom gland.

It localises to the secreted. In terms of biological role, antimicrobial peptide active against Gram-negative bacterium E.coli MH1 (MIC=2.5 uM) and P.aeruginosa PAO1 (MIC=10 uM) and against Gram-positive bacterium A.globiformis VKM Ac-1112 (MIC=0.6 uM). This chain is M-ectatotoxin-Eb2b, found in Ectatomma brunneum (Ant).